We begin with the raw amino-acid sequence, 440 residues long: D-serine dehydratase (440 aa).

N6-(pyridoxal phosphate)lysine is present on Lys116.

This sequence belongs to the serine/threonine dehydratase family. DsdA subfamily. In terms of assembly, monomer. Pyridoxal 5'-phosphate is required as a cofactor.

The enzyme catalyses D-serine = pyruvate + NH4(+). In Salmonella typhimurium (strain LT2 / SGSC1412 / ATCC 700720), this protein is D-serine dehydratase.